Here is a 573-residue protein sequence, read N- to C-terminus: Ribonuclease J (573 aa).

The segment at 1-29 (MENQERKPRRRRRRRPQEGSQGGPQDHVE) is disordered. Zn(2+)-binding residues include His-93, His-95, Asp-97, His-98, His-168, and Asp-190. Residues 259 to 261 (ASH) and 390 to 394 (HASGH) each bind substrate. A Zn(2+)-binding site is contributed by His-416.

The protein belongs to the metallo-beta-lactamase superfamily. RNA-metabolizing metallo-beta-lactamase-like family. Bacterial RNase J subfamily. In terms of assembly, homodimer. May be a subunit of the RNA degradosome. Zn(2+) serves as cofactor.

It localises to the cytoplasm. Its function is as follows. An RNase that has endonuclease and possibly 5'-3' exonuclease activity. Probably involved in maturation of rRNA and in some organisms also mRNA maturation and/or decay. The polypeptide is Ribonuclease J (Thermus thermophilus (strain ATCC BAA-163 / DSM 7039 / HB27)).